A 338-amino-acid chain; its full sequence is tRNA N6-adenosine threonylcarbamoyltransferase (338 aa).

Residues His-110 and His-114 each coordinate Fe cation. Substrate-binding positions include 132 to 136, Asp-165, Gly-178, and Asn-274; that span reads LLSGG. Residue Asp-298 coordinates Fe cation.

Belongs to the KAE1 / TsaD family. Requires Fe(2+) as cofactor.

It localises to the cytoplasm. The enzyme catalyses L-threonylcarbamoyladenylate + adenosine(37) in tRNA = N(6)-L-threonylcarbamoyladenosine(37) in tRNA + AMP + H(+). Its function is as follows. Required for the formation of a threonylcarbamoyl group on adenosine at position 37 (t(6)A37) in tRNAs that read codons beginning with adenine. Is involved in the transfer of the threonylcarbamoyl moiety of threonylcarbamoyl-AMP (TC-AMP) to the N6 group of A37, together with TsaE and TsaB. TsaD likely plays a direct catalytic role in this reaction. This is tRNA N6-adenosine threonylcarbamoyltransferase from Borrelia garinii subsp. bavariensis (strain ATCC BAA-2496 / DSM 23469 / PBi) (Borreliella bavariensis).